The following is a 431-amino-acid chain: Isochorismate synthase MenF (431 aa).

The active-site Proton acceptor is the Lys-183. Residue Glu-233 is the Proton donor of the active site. The Mg(2+) site is built by Glu-277 and Glu-414.

The protein belongs to the isochorismate synthase family. Mg(2+) is required as a cofactor.

The enzyme catalyses chorismate = isochorismate. It functions in the pathway quinol/quinone metabolism; 1,4-dihydroxy-2-naphthoate biosynthesis; 1,4-dihydroxy-2-naphthoate from chorismate: step 1/7. Its pathway is quinol/quinone metabolism; menaquinone biosynthesis. In terms of biological role, catalyzes the conversion of chorismate to isochorismate. This is Isochorismate synthase MenF from Pasteurella multocida (strain Pm70).